A 166-amino-acid chain; its full sequence is Large ribosomal subunit protein uL11 (166 aa).

The protein belongs to the universal ribosomal protein uL11 family. Part of the ribosomal stalk of the 50S ribosomal subunit. Interacts with L10 and the large rRNA to form the base of the stalk. L10 forms an elongated spine to which L12 dimers bind in a sequential fashion forming a multimeric L10(L12)X complex.

Forms part of the ribosomal stalk which helps the ribosome interact with GTP-bound translation factors. The chain is Large ribosomal subunit protein uL11 from Methanopyrus kandleri (strain AV19 / DSM 6324 / JCM 9639 / NBRC 100938).